The primary structure comprises 370 residues: Protein PELPK1 (370 aa).

A signal peptide spans 1–34 (MALMKKSLSAALLSSPLLIICLIALLADPFSVGA). 52 tandem repeats follow at residues 43–47 (PEIPK), 49–53 (PELPK), 54–58 (FEVPK), 60–64 (PEFPK), 65–69 (PELPK), 71–75 (PEFPK), 76–80 (PELPK), 82–86 (PEIPK), 87–91 (PELPK), 93–97 (PEIPK), 98–102 (PEETK), 104–108 (PDIPK), 109–113 (LELPK), 115–119 (PEIPK), 120–124 (PELPK), 126–130 (PEIPK), 131–135 (PELPK), 137–141 (PEIQK), 142–146 (PELPK), 148–152 (PEIPK), 153–157 (PELPK), 159–163 (PEIPK), 164–168 (PDLPK), 175–179 (PEVPK), 186–190 (PEAPK), 192–196 (PEIPK), 197–201 (PELPK), 203–207 (PEVPK), 214–218 (PEIQK), 219–223 (PELPK), 225–229 (PELPK), 231–235 (PEIQK), 236–240 (PELPK), 242–246 (PEVPK), 247–251 (LEAPK), 253–257 (PEIQK), 258–262 (PELPK), 264–268 (PELPK), 270–274 (PEIQK), 275–279 (PELPK), 281–285 (PEIQK), 286–290 (PELPK), 292–296 (PEVPK), 303–307 (PEVPK), 314–318 (PEIPK), 319–323 (PELPK), 325–329 (PEVPK), 330–334 (PELPK), 336–340 (PEITK), 344–348 (PEIPK), 355–359 (PQLPK), and 361–365 (PEFPK). Positions 43 to 365 (PEIPKLPELP…QLPKLPEFPK (323 aa)) are 52 X 5 AA tandem repeat of P-[DEGQ]-[AEFLIV]-[QPT]-K. Basic and acidic residues predominate over residues 65-223 (PELPKLPEFP…PEIQKPELPK (159 aa)). The interval 65-370 (PELPKLPEFP…PEFPKVPGTP (306 aa)) is disordered. Basic and acidic residues predominate over residues 232-262 (EIQKPELPKLPEVPKLEAPKVPEIQKPELPK). Basic and acidic residues-rich tracts occupy residues 271-296 (EIQK…EVPK) and 306-334 (PKSE…ELPK).

Its subcellular location is the secreted. It localises to the cell wall. In terms of biological role, positive regulator of germination and plant growth. The protein is Protein PELPK1 of Arabidopsis thaliana (Mouse-ear cress).